The chain runs to 176 residues: Large ribosomal subunit protein uL10 (176 aa).

The protein belongs to the universal ribosomal protein uL10 family. Part of the ribosomal stalk of the 50S ribosomal subunit. The N-terminus interacts with L11 and the large rRNA to form the base of the stalk. The C-terminus forms an elongated spine to which L12 dimers bind in a sequential fashion forming a multimeric L10(L12)X complex.

Functionally, forms part of the ribosomal stalk, playing a central role in the interaction of the ribosome with GTP-bound translation factors. The polypeptide is Large ribosomal subunit protein uL10 (Hahella chejuensis (strain KCTC 2396)).